The sequence spans 657 residues: Translation factor GUF1, mitochondrial (657 aa).

The N-terminal 21 residues, 1-21 (MLKTLGLRSLCPSLGGRGFRR), are a transit peptide targeting the mitochondrion. The tr-type G domain maps to 56–240 (ENYRNFSIVA…TIVDRIPPPT (185 aa)). Residues 65–72 (AHVDHGKS), 132–136 (DTPGH), and 186–189 (NKID) contribute to the GTP site.

Belongs to the TRAFAC class translation factor GTPase superfamily. Classic translation factor GTPase family. LepA subfamily.

The protein localises to the mitochondrion inner membrane. The enzyme catalyses GTP + H2O = GDP + phosphate + H(+). Its function is as follows. Promotes mitochondrial protein synthesis. May act as a fidelity factor of the translation reaction, by catalyzing a one-codon backward translocation of tRNAs on improperly translocated ribosomes. Binds to mitochondrial ribosomes in a GTP-dependent manner. The polypeptide is Translation factor GUF1, mitochondrial (Candida glabrata (strain ATCC 2001 / BCRC 20586 / JCM 3761 / NBRC 0622 / NRRL Y-65 / CBS 138) (Yeast)).